The sequence spans 909 residues: WD repeat-containing protein 20 homolog (909 aa).

Residues 58–132 are disordered; the sequence is SPAQGKLGSD…SAGNNTVEAR (75 aa). Composition is skewed to low complexity over residues 80–107 and 115–127; these read GANT…AISN and SHSN…AGNN. WD repeat units follow at residues 248-288, 321-362, 363-402, and 470-517; these read IDKT…AATA, TDNC…GIAR, SYFG…VVAR, and ADRN…LRHP. Disordered regions lie at residues 458 to 483, 554 to 628, 661 to 699, 720 to 739, and 749 to 775; these read FEGF…FRSD, SGQA…AGSV, SDSI…NSGS, SEKK…RQHR, and NQHN…GHSS. 2 stretches are compositionally biased toward polar residues: residues 555–569 and 595–606; these read GQAT…SCSP and TANCTISSQSSP. Low complexity-rich tracts occupy residues 612-628 and 673-699; these read EAAT…AGSV and GQRP…NSGS. Residues 856-893 form a WD 5 repeat; sequence IAHERLTALIFREDCFLTACQDGFIYTWARPGHATHAT.

In terms of assembly, component of the Usp12-46 deubiquitylase complex consisting of Usp12-46, Wdr20 and Uaf1; regulatory subunit that, together with Uaf1, stabilizes Usp12-46. The Usp12-46 deubiquitylase complex associates with arr/arrow; the interaction leads to deubiquitination and stabilization of arr/arrow.

Functionally, regulatory component of the Usp12-46 deubiquitylase complex. This complex deubiquitylates the wg/wingless-signaling receptor arr/arrow, which stabilizes the receptor and increases its concentration at the cell surface; this enhances the sensitivity of cells to wg/wingless-signal stimulation. This increases the amplitude and spatial range of the signaling response to the wg/wingless morphogen gradient, facilitating the precise concentration-dependent regulation of its target genes. Required for wg/wingless-mediated signaling in the wing imaginal disc and for wg/wingless-dependent regulation of intestinal stem cell proliferation. The sequence is that of WD repeat-containing protein 20 homolog from Drosophila melanogaster (Fruit fly).